The primary structure comprises 273 residues: HTH-type transcriptional activator RhaS (273 aa).

Residues 174–272 (YQLLDWLQNN…SQSPRDLRSQ (99 aa)) form the HTH araC/xylS-type domain. 2 consecutive DNA-binding regions (H-T-H motif) follow at residues 191-212 (PELA…KNKT) and 239-262 (VTDI…KREF).

In terms of assembly, binds DNA as a dimer.

The protein resides in the cytoplasm. Activates expression of the rhaBAD and rhaT operons. In Yersinia pestis bv. Antiqua (strain Antiqua), this protein is HTH-type transcriptional activator RhaS.